The sequence spans 155 residues: Large ribosomal subunit protein uL30 (155 aa).

This sequence belongs to the universal ribosomal protein uL30 family. In terms of assembly, part of the 50S ribosomal subunit.

The polypeptide is Large ribosomal subunit protein uL30 (Nanoarchaeum equitans (strain Kin4-M)).